We begin with the raw amino-acid sequence, 289 residues long: Urease accessory protein UreD (289 aa).

The protein belongs to the UreD family. In terms of assembly, ureD, UreF and UreG form a complex that acts as a GTP-hydrolysis-dependent molecular chaperone, activating the urease apoprotein by helping to assemble the nickel containing metallocenter of UreC. The UreE protein probably delivers the nickel.

Its subcellular location is the cytoplasm. Required for maturation of urease via the functional incorporation of the urease nickel metallocenter. The sequence is that of Urease accessory protein UreD from Xanthobacter autotrophicus (strain ATCC BAA-1158 / Py2).